Consider the following 386-residue polypeptide: Peroxisomal membrane protein PEX13 (386 aa).

The interval 1–76 (MSSTAVPRPK…SSGTYGESNT (76 aa)) is disordered. Residues 1–263 (MSSTAVPRPK…KATRRKISWK (263 aa)) lie on the Lumenal side of the membrane. Positions 23 to 39 (RNAQSLSAMMTSNQQDS) are enriched in polar residues. The segment covering 44 to 55 (ESNNSNSASESA) has biased composition (low complexity). Residues 65 to 76 (LNSSGTYGESNT) are compositionally biased toward polar residues. The helical transmembrane segment at 264–280 (PLLFFLMAVFGFPYLLN) threads the bilayer. The Cytoplasmic portion of the chain corresponds to 281-386 (KFITKLQTSG…EHVDDETRTH (106 aa)). The region spanning 306 to 372 (SKLEFARALY…PYNYIEIIKR (67 aa)) is the SH3 domain.

Belongs to the peroxin-13 family. Interacts (via SH3 domain) with PEX14 (via SH3-binding motif); forming the PEX13-PEX14 docking complex.

It is found in the peroxisome membrane. Component of the PEX13-PEX14 docking complex, a translocon channel that specifically mediates the import of peroxisomal cargo proteins bound to PEX5 or PEX21 receptors. The PEX13-PEX14 docking complex forms a large import pore which can be opened to a diameter of about 9 nm. Mechanistically, PEX5 (or PEX21) receptor along with cargo proteins associates with the PEX14 subunit of the PEX13-PEX14 docking complex in the cytosol, leading to the insertion of the receptor into the organelle membrane with the concomitant translocation of the cargo into the peroxisome matrix. The sequence is that of Peroxisomal membrane protein PEX13 from Saccharomyces cerevisiae (strain ATCC 204508 / S288c) (Baker's yeast).